The following is a 911-amino-acid chain: Ribonuclease J (911 aa).

Residues 1 to 70 (MMKPASLQGF…VTSAPASGTS (70 aa)) constitute a chloroplast transit peptide. Residues 58-90 (SCSVTSAPASGTSSSSKTPRRRSGRLEGVGKSM) form a disordered region. Residues 63-74 (SAPASGTSSSSK) are compositionally biased toward low complexity. Residues His175, His177, Asp179, His180, His245, and Asp267 each contribute to the Zn(2+) site. Substrate-binding positions include 336–338 (ASN) and 468–472 (HTSGH). A Zn(2+)-binding site is contributed by His494. Disordered regions lie at residues 695–723 (VEGN…TLED) and 735–824 (EETA…WKPE). Basic and acidic residues-rich tracts occupy residues 713–722 (SPKEVDRTLE) and 783–795 (ADTE…KENS). Acidic residues predominate over residues 796–806 (RDDDELADASD). The region spanning 813 to 877 (PKRVRKNKWK…QCKSLWASLI (65 aa)) is the Myb-like domain.

The protein belongs to the metallo-beta-lactamase superfamily. RNA-metabolizing metallo-beta-lactamase-like family. Bacterial RNase J subfamily. Homodimer. May be a subunit of the RNA degradosome. The cofactor is Zn(2+). Moslty expressed in inflorescences, seedlings, leaves, flowers and flower buds, and, to a lower extent, in stems, siliques and roots.

Its subcellular location is the plastid. The protein localises to the chloroplast. Its function is as follows. Essential protein required during embryogenesis, especially in initiating and maintaining the organization of shoot apical meristems (SAMs), cotyledons, and hypocotyls. Involved in auxin-mediated pathways during embryogenesis. RNase that has both endonuclease and 5'-3' exonuclease activities. Involved in RNA surveillance to prevent overaccumulation of antisense RNA. Probably involved in maturation of rRNA and in some organisms also mRNA maturation and/or decay. The chain is Ribonuclease J from Arabidopsis thaliana (Mouse-ear cress).